Consider the following 87-residue polypeptide: Small ribosomal subunit protein bS18 (87 aa).

Residues 1 to 20 (MAGKSSGDRRKPIRKGKDGK) show a composition bias toward basic and acidic residues. Residues 1-24 (MAGKSSGDRRKPIRKGKDGKNAAP) are disordered.

This sequence belongs to the bacterial ribosomal protein bS18 family. In terms of assembly, part of the 30S ribosomal subunit. Forms a tight heterodimer with protein bS6.

Its function is as follows. Binds as a heterodimer with protein bS6 to the central domain of the 16S rRNA, where it helps stabilize the platform of the 30S subunit. This is Small ribosomal subunit protein bS18 from Leifsonia xyli subsp. xyli (strain CTCB07).